Consider the following 316-residue polypeptide: tRNA pseudouridine synthase B (316 aa).

The active-site Nucleophile is Asp47.

Belongs to the pseudouridine synthase TruB family. Type 1 subfamily.

It carries out the reaction uridine(55) in tRNA = pseudouridine(55) in tRNA. In terms of biological role, responsible for synthesis of pseudouridine from uracil-55 in the psi GC loop of transfer RNAs. The sequence is that of tRNA pseudouridine synthase B from Photobacterium profundum (strain SS9).